A 349-amino-acid chain; its full sequence is Peptide transport system ATP-binding protein SapD (349 aa).

The 259-residue stretch at 1–259 (MALLDICNLN…PHHPYTQALI (259 aa)) folds into the ABC transporter domain. 40–47 (GESGSGKS) contributes to the ATP binding site.

This sequence belongs to the ABC transporter superfamily.

The protein resides in the cell inner membrane. Involved in a peptide intake transport system that plays a role in the resistance to antimicrobial peptides. The sequence is that of Peptide transport system ATP-binding protein SapD (sapD) from Haemophilus influenzae (strain ATCC 51907 / DSM 11121 / KW20 / Rd).